The primary structure comprises 478 residues: Methionine aminopeptidase 2 (478 aa).

Positions 1–122 (MAGVEEVAAS…TDPPSVPICD (122 aa)) are disordered. Residue A2 is modified to N-acetylalanine. Residues 36–46 (KKKRRKKKKSK) show a composition bias toward basic residues. Position 45 is a phosphoserine (S45). Residues 55-79 (EPDKESGASVDEVARQLERSALEDK) show a composition bias toward basic and acidic residues. Residues S60 and S63 each carry the phosphoserine; alternate modification. Residues S60 and S63 are each glycosylated (O-linked (GlcNAc) serine; alternate). S74 carries the phosphoserine modification. A compositionally biased stretch (acidic residues) spans 80–92 (ERDEDDEDGDGDG). Residues 97-109 (GKKKKKKKKKRGP) show a composition bias toward basic residues. H231 serves as a coordination point for substrate. Residues D251, D262, and H331 each coordinate a divalent metal cation. H339 is a binding site for substrate. E364 and E459 together coordinate a divalent metal cation.

This sequence belongs to the peptidase M24A family. Methionine aminopeptidase eukaryotic type 2 subfamily. As to quaternary structure, interacts strongly with the eIF-2 gamma-subunit EIF2S3. Binds EIF2S1 at low magnesium concentrations. Requires Co(2+) as cofactor. The cofactor is Zn(2+). Mn(2+) is required as a cofactor. It depends on Fe(2+) as a cofactor. Post-translationally, contains approximately 12 O-linked N-acetylglucosamine (GlcNAc) residues. O-glycosylation is required for EIF2S1 binding.

It is found in the cytoplasm. It catalyses the reaction Release of N-terminal amino acids, preferentially methionine, from peptides and arylamides.. In terms of biological role, cotranslationally removes the N-terminal methionine from nascent proteins. The N-terminal methionine is often cleaved when the second residue in the primary sequence is small and uncharged (Met-Ala-, Cys, Gly, Pro, Ser, Thr, or Val). The catalytic activity of human METAP2 toward Met-Val peptides is consistently two orders of magnitude higher than that of METAP1, suggesting that it is responsible for processing proteins containing N-terminal Met-Val and Met-Thr sequences in vivo. Its function is as follows. Protects eukaryotic initiation factor EIF2S1 from translation-inhibiting phosphorylation by inhibitory kinases such as EIF2AK2/PKR and EIF2AK1/HCR. Plays a critical role in the regulation of protein synthesis. In Homo sapiens (Human), this protein is Methionine aminopeptidase 2.